Here is a 152-residue protein sequence, read N- to C-terminus: UPF0266 membrane protein YobD (152 aa).

3 helical membrane passes run 6-26 (LVLILFIAALLVYALYDQFIM), 45-65 (VDSVIFVGLVAILIYNNVTSH), and 67-87 (AQMTTWLLSALALMGFYIFWI).

It belongs to the UPF0266 family.

It is found in the cell inner membrane. This chain is UPF0266 membrane protein YobD, found in Salmonella paratyphi A (strain ATCC 9150 / SARB42).